The primary structure comprises 572 residues: Probable terpene synthase 13 (572 aa).

Mg(2+) contacts are provided by aspartate 326, aspartate 330, and glutamate 478. Positions 326–330 (DDIFD) match the DDXXD motif motif.

This sequence belongs to the terpene synthase family. It depends on Mg(2+) as a cofactor.

Its function is as follows. Probable sesquiterpene synthase. This chain is Probable terpene synthase 13 (TPS13), found in Ricinus communis (Castor bean).